Reading from the N-terminus, the 243-residue chain is Urease accessory protein UreF (243 aa).

The protein belongs to the UreF family. As to quaternary structure, ureD, UreF and UreG form a complex that acts as a GTP-hydrolysis-dependent molecular chaperone, activating the urease apoprotein by helping to assemble the nickel containing metallocenter of UreC. The UreE protein probably delivers the nickel.

It is found in the cytoplasm. Its function is as follows. Required for maturation of urease via the functional incorporation of the urease nickel metallocenter. In Xanthobacter autotrophicus (strain ATCC BAA-1158 / Py2), this protein is Urease accessory protein UreF.